The following is a 236-amino-acid chain: Uridylate kinase (236 aa).

10–13 is an ATP binding site; that stretch reads KLSG. Residue Gly-52 participates in UMP binding. ATP-binding residues include Gly-53 and Arg-57. UMP-binding positions include Asp-72 and 133–140; that span reads TGNPFFTT. The ATP site is built by Thr-160, Tyr-166, and Asp-169.

Belongs to the UMP kinase family. Homohexamer.

The protein resides in the cytoplasm. It carries out the reaction UMP + ATP = UDP + ADP. It participates in pyrimidine metabolism; CTP biosynthesis via de novo pathway; UDP from UMP (UMPK route): step 1/1. With respect to regulation, inhibited by UTP. Its function is as follows. Catalyzes the reversible phosphorylation of UMP to UDP. This Bacteroides fragilis (strain ATCC 25285 / DSM 2151 / CCUG 4856 / JCM 11019 / LMG 10263 / NCTC 9343 / Onslow / VPI 2553 / EN-2) protein is Uridylate kinase.